The sequence spans 454 residues: tRNA modification GTPase MnmE (454 aa).

The (6S)-5-formyl-5,6,7,8-tetrahydrofolate site is built by Arg23, Glu80, and Lys120. Residues 216–377 (GMKVVIAGRP…LREHLKQSMG (162 aa)) form the TrmE-type G domain. Position 226 (Asn226) interacts with K(+). Residues 226–231 (NAGKSS), 245–251 (TDIAGTT), and 270–273 (DTAG) contribute to the GTP site. Position 230 (Ser230) interacts with Mg(2+). Thr245, Ile247, and Thr250 together coordinate K(+). Thr251 lines the Mg(2+) pocket. Position 454 (Lys454) interacts with (6S)-5-formyl-5,6,7,8-tetrahydrofolate.

It belongs to the TRAFAC class TrmE-Era-EngA-EngB-Septin-like GTPase superfamily. TrmE GTPase family. As to quaternary structure, homodimer. Heterotetramer of two MnmE and two MnmG subunits. It depends on K(+) as a cofactor.

The protein resides in the cytoplasm. In terms of biological role, exhibits a very high intrinsic GTPase hydrolysis rate. Involved in the addition of a carboxymethylaminomethyl (cmnm) group at the wobble position (U34) of certain tRNAs, forming tRNA-cmnm(5)s(2)U34. The protein is tRNA modification GTPase MnmE of Mannheimia succiniciproducens (strain KCTC 0769BP / MBEL55E).